A 383-amino-acid chain; its full sequence is NIPA-like protein 2 (383 aa).

N-linked (GlcNAc...) asparagine glycans are attached at residues N23 and N33. The next 9 membrane-spanning stretches (helical) occupy residues 46-66 (IHLF…ISLN), 88-108 (VLWL…FAAY), 115-135 (LIAP…VLFL), 144-164 (LLGM…APNI), 177-197 (FVGW…CILL), 208-228 (IVVL…SVKA), 243-263 (LTYA…VFQV), 278-298 (VVPV…IIFY), and 306-326 (FLTV…VFLV). Residues 352 to 383 (DKVQPDSNGLSYGTLPDGGDSTRGQCGEKKES) are disordered.

The protein belongs to the NIPA family.

The protein localises to the membrane. In Mus musculus (Mouse), this protein is NIPA-like protein 2 (Nipal2).